A 357-amino-acid chain; its full sequence is Putative ABC transporter ATP-binding protein MG303 (357 aa).

In terms of domain architecture, ABC transporter spans 72–312; sequence LFFNNISVFV…TSWLMQYGIT (241 aa). 107–114 contributes to the ATP binding site; sequence GESGSGKT.

The protein belongs to the ABC transporter superfamily.

This is Putative ABC transporter ATP-binding protein MG303 from Mycoplasma genitalium (strain ATCC 33530 / DSM 19775 / NCTC 10195 / G37) (Mycoplasmoides genitalium).